Consider the following 387-residue polypeptide: Patatin-08 (387 aa).

The N-terminal stretch at 1 to 23 (MATTKSFLILIVMILATTSSTFA) is a signal peptide. Positions 32–230 (LSIDGGGIKG…TVADPALLSI (199 aa)) constitute a PNPLA domain. A GXGXXG motif is present at residues 36–41 (GGGIKG). Positions 75–79 (GTSTG) match the GXSXG motif. Serine 77 functions as the Nucleophile in the catalytic mechanism. Asparagine 115 carries an N-linked (GlcNAc...) asparagine glycan. Catalysis depends on aspartate 216, which acts as the Proton acceptor. Positions 216-218 (DGA) match the DGA/G motif. Positions 361 to 385 (ETYEEALKRFAKLLSDRKKLRANKA) form a coiled coil.

Belongs to the patatin family. Tuber.

Its subcellular location is the vacuole. Functionally, probable lipolytic acyl hydrolase (LAH), an activity which is thought to be involved in the response of tubers to pathogens. The polypeptide is Patatin-08 (Solanum tuberosum (Potato)).